A 202-amino-acid chain; its full sequence is Matrix protein (202 aa).

The PPXY motif motif lies at 35 to 38; sequence PPEY. Residues 115 to 151 are essential for glycoprotein binding; it reads KLRRTLIFQWADSRGPLEGEELEYSQEITWDDDTEFV.

Belongs to the lyssavirus matrix protein family. In terms of assembly, homomultimer. Interacts with nucleoprotein and with the cytoplasmic domain of glycoprotein. Interacts with host ATP6V1A; this interaction plays an important role in virion uncoating after viral entry.

The protein localises to the virion membrane. It localises to the host endomembrane system. Its subcellular location is the host cytoplasm. Plays a major role in assembly, budding and uncoating of virion after membrane fusion. Completely covers the ribonucleoprotein coil and keep it in condensed bullet-shaped form. Inhibits viral transcription and stimulates replication. Plays a major role in early induction of TRAIL-mediated apoptosis in infected neurons. Inhibits the integrated stress response (ISR) in the infected cell by blocking the formation of stress granules. This chain is Matrix protein (M), found in Homo sapiens (Human).